Consider the following 460-residue polypeptide: Angiopoietin-related protein 3 (460 aa).

An N-terminal signal peptide occupies residues 1–16 (MFTIKLLLFIVPLVIS). The interval 17–165 (SRIDQDNSSF…PEHPEVTSLK (149 aa)) is sufficient to inhibit LPL lipase activity. The sufficient to inhibit LIPG/EL phospholipase activity stretch occupies residues 17 to 207 (SRIDQDNSSF…EIENQLRRTS (191 aa)). Positions 32–56 (EPKSRFAMLDDVKILANGLLQLGHG) are required for inhibition of LPL lipase activity. Positions 85-210 (LSLQTSEIKE…NQLRRTSIQE (126 aa)) form a coiled coil. Asn-115 carries N-linked (GlcNAc...) asparagine glycosylation. The O-linked (GalNAc) threonine glycan is linked to Thr-226. Residues 237 to 455 (VKHDGIPAEC…STKMLIHPTD (219 aa)) form the Fibrinogen C-terminal domain. Cys-246 and Cys-274 are oxidised to a cystine. 2 N-linked (GlcNAc...) asparagine glycosylation sites follow: Asn-296 and Asn-357. Cys-394 and Cys-408 are oxidised to a cystine.

As to quaternary structure, interacts with ANGPTL8. Interacts with ITGB3. O-glycosylated at Thr-226 by GALNT2; blocks processing and activation by proprotein convertases. Post-translationally, in part proteolytically cleaved by proprotein convertases; proposed to be involved in activation. Expressed principally in liver. Weakly expressed in kidney. Binds to adipocytes. Increased expression and colocalization with activated ITGB3 in glomeruli of patients with nephrotic syndrome showing effaced podocyte foot processes (at protein level).

It localises to the secreted. The protein resides in the cell projection. The protein localises to the lamellipodium. Acts in part as a hepatokine that is involved in regulation of lipid and glucose metabolism. Proposed to play a role in the trafficking of energy substrates to either storage or oxidative tissues in response to food intake. Has a stimulatory effect on plasma triglycerides (TG), which is achieved by suppressing plasma TG clearance via inhibition of LPL activity. The inhibition of LPL activity appears to be an indirect mechanism involving recruitment of proprotein convertases PCSK6 and FURIN to LPL leading to cleavage and dissociation of LPL from the cell surface; the function does not require ANGPTL3 proteolytic cleavage but seems to be mediated by the N-terminal domain, and is not inhibited by GPIHBP1. Can inhibit endothelial lipase, causing increased plasma levels of high density lipoprotein (HDL) cholesterol and phospholipids. Can bind to adipocytes to activate lipolysis, releasing free fatty acids and glycerol. Suppresses LPL specifically in oxidative tissues which is required to route very low density lipoprotein (VLDL)-TG to white adipose tissue (WAT) for storage in response to food; the function may involve cooperation with circulating, liver-derived ANGPTL8 and ANGPTL4 expression in WAT. Contributes to lower plasma levels of low density lipoprotein (LDL)-cholesterol by a mechanism that is independent of the canonical pathway implicating APOE and LDLR. May stimulate hypothalamic LPL activity. Functionally, in vitro inhibits LPL activity; not effective on GPIHBP1-stabilized LPL. Its function is as follows. Involved in angiogenesis. Binds to endothelial cells via integrin alpha-V/beta-3 (ITGAV:ITGB3), activates FAK, MAPK and Akt signaling pathways and induces cell adhesion and cell migration. Secreted from podocytes, may modulate properties of glomerular endothelial cells involving integrin alpha-V/beta-3 and Akt signaling. May increase the motility of podocytes. May induce actin filament rearrangements in podocytes implicating integrin alpha-V/beta-3 and Rac1 activation. Binds to hematopoietic stem cells (HSC) and is involved in the regulation of HSC activity probably implicating down-regulation of IKZF1/IKAROS. This is Angiopoietin-related protein 3 (ANGPTL3) from Homo sapiens (Human).